We begin with the raw amino-acid sequence, 317 residues long: Melanocyte-stimulating hormone receptor (317 aa).

The Extracellular segment spans residues 1–37; sequence MPAQGSQRSXLGSLNSTLMATPSLGLAANQSGPQCLE. 2 N-linked (GlcNAc...) asparagine glycosylation sites follow: Asn-15 and Asn-29. Residues 38–63 form a helical membrane-spanning segment; the sequence is VSVPDGLFLCLGLVSLVENMLVVAAI. The Cytoplasmic segment spans residues 64-72; that stretch reads AKNRNLHSP. The chain crosses the membrane as a helical span at residues 73–93; the sequence is MYCFICCLALSDLLVSISNVL. Residues 94-118 are Extracellular-facing; it reads ETAVMLLLEAGALAVGATVVQQLDN. Residues 119–140 traverse the membrane as a helical segment; that stretch reads VIDVLICSSMVSSLCFLGAIAM. Residues 141-163 are Cytoplasmic-facing; the sequence is DRYISIFYALRYHSIVTLSRAQW. The helical transmembrane segment at 164 to 183 threads the bilayer; that stretch reads ATAAVWAASILSSTLFIAYY. Residues 184–191 lie on the Extracellular side of the membrane; it reads DRTVVLLC. The chain crosses the membrane as a helical span at residues 192–211; it reads LVVFFLAMLVLMAVLYAHML. Topologically, residues 212–240 are cytoplasmic; the sequence is TQACQHVQGITRLHKRQHLVQQGFGLKGA. Residues 241–266 traverse the membrane as a helical segment; it reads ATLTILLGVFLLCWGPFFLHLTLIAV. The Extracellular segment spans residues 267-279; that stretch reads CPQHPTCSCVFKN. Residues 280–300 traverse the membrane as a helical segment; it reads FKLFLALIICNAIVDPLIYAF. The Cytoplasmic segment spans residues 301 to 317; it reads RSQELRKTLKEVLLFSW.

This sequence belongs to the G-protein coupled receptor 1 family. Interacts with MGRN1, but does not undergo MGRN1-mediated ubiquitination; this interaction competes with GNAS-binding and thus inhibits agonist-induced cAMP production. Interacts with OPN3; the interaction results in a decrease in MC1R-mediated cAMP signaling and ultimately a decrease in melanin production in melanocytes.

Its subcellular location is the cell membrane. Receptor for MSH (alpha, beta and gamma) and ACTH. The activity of this receptor is mediated by G proteins which activate adenylate cyclase. Mediates melanogenesis, the production of eumelanin (black/brown) and phaeomelanin (red/yellow), via regulation of cAMP signaling in melanocytes. The chain is Melanocyte-stimulating hormone receptor (MC1R) from Galago senegalensis (Northern lesser bushbaby).